Consider the following 216-residue polypeptide: Imidazole glycerol phosphate synthase subunit HisH (216 aa).

In terms of domain architecture, Glutamine amidotransferase type-1 spans 2-216; it reads SVAIVDYGSG…LISNFLKWKP (215 aa). The active-site Nucleophile is cysteine 88. Residues histidine 196 and glutamate 198 contribute to the active site.

Heterodimer of HisH and HisF.

It is found in the cytoplasm. The catalysed reaction is 5-[(5-phospho-1-deoxy-D-ribulos-1-ylimino)methylamino]-1-(5-phospho-beta-D-ribosyl)imidazole-4-carboxamide + L-glutamine = D-erythro-1-(imidazol-4-yl)glycerol 3-phosphate + 5-amino-1-(5-phospho-beta-D-ribosyl)imidazole-4-carboxamide + L-glutamate + H(+). It carries out the reaction L-glutamine + H2O = L-glutamate + NH4(+). The protein operates within amino-acid biosynthesis; L-histidine biosynthesis; L-histidine from 5-phospho-alpha-D-ribose 1-diphosphate: step 5/9. Its function is as follows. IGPS catalyzes the conversion of PRFAR and glutamine to IGP, AICAR and glutamate. The HisH subunit catalyzes the hydrolysis of glutamine to glutamate and ammonia as part of the synthesis of IGP and AICAR. The resulting ammonia molecule is channeled to the active site of HisF. This is Imidazole glycerol phosphate synthase subunit HisH from Rhodopseudomonas palustris (strain ATCC BAA-98 / CGA009).